Consider the following 319-residue polypeptide: MQFSLIPFISSFALTVIFLPLFIGFMRMKHEGQVIRDEGPKWHEKKSGTPTMGGVVFMLAGVISTLWVLIWQKDLNKTAWILIIAFLGYGIIGFLDDGIKLYFKRNLGLRAWQKLLGQIIIAALIITLAFSDHFAFELYIPFAGMVRNSFLFSLFVLFWLVGFSNAVNLSDGLDGLATGLSIIAYATYAWIAYQERNWVIVVFTLSVIGGLVGFFIFNHKPAKIFMGDAGSLALGGGLATVSIFLHRPWSLLLIGIVFVLETLSVILQVISFQTTGKRIFKMTPIHHHFEMLGWSEWKVDIVFWIVGLIGSIIYLIIWG.

The next 10 membrane-spanning stretches (helical) occupy residues 5 to 25, 51 to 71, 79 to 99, 116 to 136, 149 to 169, 172 to 192, 197 to 217, 224 to 244, 252 to 272, and 299 to 319; these read LIPFISSFALTVIFLPLFIGF, TMGGVVFMLAGVISTLWVLIW, AWILIIAFLGYGIIGFLDDGI, LGQIIIAALIITLAFSDHFAF, SFLFSLFVLFWLVGFSNAVNL, GLDGLATGLSIIAYATYAWIA, NWVIVVFTLSVIGGLVGFFIF, IFMGDAGSLALGGGLATVSIF, LLIGIVFVLETLSVILQVISF, and VDIVFWIVGLIGSIIYLIIWG.

It belongs to the glycosyltransferase 4 family. MraY subfamily. Mg(2+) serves as cofactor.

It is found in the cell membrane. It carries out the reaction UDP-N-acetyl-alpha-D-muramoyl-L-alanyl-gamma-D-glutamyl-L-lysyl-D-alanyl-D-alanine + di-trans,octa-cis-undecaprenyl phosphate = Mur2Ac(oyl-L-Ala-gamma-D-Glu-L-Lys-D-Ala-D-Ala)-di-trans,octa-cis-undecaprenyl diphosphate + UMP. Its pathway is cell wall biogenesis; peptidoglycan biosynthesis. Functionally, catalyzes the initial step of the lipid cycle reactions in the biosynthesis of the cell wall peptidoglycan: transfers peptidoglycan precursor phospho-MurNAc-pentapeptide from UDP-MurNAc-pentapeptide onto the lipid carrier undecaprenyl phosphate, yielding undecaprenyl-pyrophosphoryl-MurNAc-pentapeptide, known as lipid I. The protein is Phospho-N-acetylmuramoyl-pentapeptide-transferase of Lactobacillus johnsonii (strain CNCM I-12250 / La1 / NCC 533).